The following is a 327-amino-acid chain: Biotin synthase (327 aa).

Positions 49–275 (RFGREVSLCS…VNPHAEVRMA (227 aa)) constitute a Radical SAM core domain. Positions 67, 71, and 74 each coordinate [4Fe-4S] cluster. [2Fe-2S] cluster is bound by residues serine 112, cysteine 143, cysteine 203, and arginine 273.

The protein belongs to the radical SAM superfamily. Biotin synthase family. In terms of assembly, homodimer. Requires [4Fe-4S] cluster as cofactor. The cofactor is [2Fe-2S] cluster.

It catalyses the reaction (4R,5S)-dethiobiotin + (sulfur carrier)-SH + 2 reduced [2Fe-2S]-[ferredoxin] + 2 S-adenosyl-L-methionine = (sulfur carrier)-H + biotin + 2 5'-deoxyadenosine + 2 L-methionine + 2 oxidized [2Fe-2S]-[ferredoxin]. It functions in the pathway cofactor biosynthesis; biotin biosynthesis; biotin from 7,8-diaminononanoate: step 2/2. In terms of biological role, catalyzes the conversion of dethiobiotin (DTB) to biotin by the insertion of a sulfur atom into dethiobiotin via a radical-based mechanism. The sequence is that of Biotin synthase from Maridesulfovibrio salexigens (strain ATCC 14822 / DSM 2638 / NCIMB 8403 / VKM B-1763) (Desulfovibrio salexigens).